A 714-amino-acid polypeptide reads, in one-letter code: DNA ligase (714 aa).

Residues 47–51 (DAAYD), 96–97 (SL), and Glu-130 contribute to the NAD(+) site. Catalysis depends on Lys-132, which acts as the N6-AMP-lysine intermediate. Residues Arg-153, Glu-190, Lys-306, and Lys-330 each contribute to the NAD(+) site. Residues Cys-435, Cys-438, Cys-453, and Cys-459 each coordinate Zn(2+). Residues 636-714 (RNDSAVAGKT…EDEWLKLIEG (79 aa)) enclose the BRCT domain.

The protein belongs to the NAD-dependent DNA ligase family. LigA subfamily. The cofactor is Mg(2+). Requires Mn(2+) as cofactor.

The enzyme catalyses NAD(+) + (deoxyribonucleotide)n-3'-hydroxyl + 5'-phospho-(deoxyribonucleotide)m = (deoxyribonucleotide)n+m + AMP + beta-nicotinamide D-nucleotide.. Its function is as follows. DNA ligase that catalyzes the formation of phosphodiester linkages between 5'-phosphoryl and 3'-hydroxyl groups in double-stranded DNA using NAD as a coenzyme and as the energy source for the reaction. It is essential for DNA replication and repair of damaged DNA. The sequence is that of DNA ligase from Nitrobacter hamburgensis (strain DSM 10229 / NCIMB 13809 / X14).